The chain runs to 119 residues: Beta-2-microglobulin (119 aa).

Positions Met1 to Ala20 are cleaved as a signal peptide. Residues Pro25–Lys114 enclose the Ig-like C1-type domain. Residues Cys45 and Cys100 are joined by a disulfide bond.

Belongs to the beta-2-microglobulin family. In terms of assembly, heterodimer of an alpha chain and a beta chain. Beta-2-microglobulin is the beta-chain of major histocompatibility complex class I molecules.

It localises to the secreted. Functionally, component of the class I major histocompatibility complex (MHC). Involved in the presentation of peptide antigens to the immune system. This Alouatta seniculus (Red howler monkey) protein is Beta-2-microglobulin (B2M).